The chain runs to 405 residues: Riboflavin biosynthesis protein RibBA (405 aa).

The interval 1–205 is DHBP synthase; that stretch reads MEEIKLNTIE…IKDLIAYRLK (205 aa). D-ribulose 5-phosphate is bound by residues 30-31, D35, 144-148, and E168; these read RE and RAGHT. Residue E31 participates in Mg(2+) binding. Mg(2+) is bound at residue H147. The tract at residues 206–405 is GTP cyclohydrolase II; the sequence is QESIVEKGVE…RMGHELHNIK (200 aa). GTP is bound at residue 256–260; it reads RMHSS. The Zn(2+) site is built by C261, C272, and C274. GTP-binding positions include Q277, 299-301, and T321; that span reads EGR. Residue D333 is the Proton acceptor; for GTP cyclohydrolase activity of the active site. R335 serves as the catalytic Nucleophile; for GTP cyclohydrolase activity. T356 and K361 together coordinate GTP.

This sequence in the N-terminal section; belongs to the DHBP synthase family. The protein in the C-terminal section; belongs to the GTP cyclohydrolase II family. It depends on Mg(2+) as a cofactor. The cofactor is Mn(2+). Zn(2+) is required as a cofactor.

The catalysed reaction is D-ribulose 5-phosphate = (2S)-2-hydroxy-3-oxobutyl phosphate + formate + H(+). It carries out the reaction GTP + 4 H2O = 2,5-diamino-6-hydroxy-4-(5-phosphoribosylamino)-pyrimidine + formate + 2 phosphate + 3 H(+). It participates in cofactor biosynthesis; riboflavin biosynthesis; 2-hydroxy-3-oxobutyl phosphate from D-ribulose 5-phosphate: step 1/1. It functions in the pathway cofactor biosynthesis; riboflavin biosynthesis; 5-amino-6-(D-ribitylamino)uracil from GTP: step 1/4. In terms of biological role, catalyzes the conversion of D-ribulose 5-phosphate to formate and 3,4-dihydroxy-2-butanone 4-phosphate. Functionally, catalyzes the conversion of GTP to 2,5-diamino-6-ribosylamino-4(3H)-pyrimidinone 5'-phosphate (DARP), formate and pyrophosphate. The sequence is that of Riboflavin biosynthesis protein RibBA from Porphyromonas gingivalis (strain ATCC 33277 / DSM 20709 / CIP 103683 / JCM 12257 / NCTC 11834 / 2561).